Consider the following 335-residue polypeptide: 4-hydroxy-3-methylbut-2-enyl diphosphate reductase 2 (335 aa).

C37 lines the [4Fe-4S] cluster pocket. Positions 66 and 99 each coordinate (2E)-4-hydroxy-3-methylbut-2-enyl diphosphate. 2 residues coordinate dimethylallyl diphosphate: H66 and H99. 2 residues coordinate isopentenyl diphosphate: H66 and H99. C121 provides a ligand contact to [4Fe-4S] cluster. Position 149 (H149) interacts with (2E)-4-hydroxy-3-methylbut-2-enyl diphosphate. H149 contributes to the dimethylallyl diphosphate binding site. Residue H149 coordinates isopentenyl diphosphate. The active-site Proton donor is the E151. T189 serves as a coordination point for (2E)-4-hydroxy-3-methylbut-2-enyl diphosphate. C219 provides a ligand contact to [4Fe-4S] cluster. Residues S247, S248, N249, and S292 each contribute to the (2E)-4-hydroxy-3-methylbut-2-enyl diphosphate site. Positions 247, 248, 249, and 292 each coordinate dimethylallyl diphosphate. 4 residues coordinate isopentenyl diphosphate: S247, S248, N249, and S292.

It belongs to the IspH family. [4Fe-4S] cluster serves as cofactor.

The catalysed reaction is isopentenyl diphosphate + 2 oxidized [2Fe-2S]-[ferredoxin] + H2O = (2E)-4-hydroxy-3-methylbut-2-enyl diphosphate + 2 reduced [2Fe-2S]-[ferredoxin] + 2 H(+). It catalyses the reaction dimethylallyl diphosphate + 2 oxidized [2Fe-2S]-[ferredoxin] + H2O = (2E)-4-hydroxy-3-methylbut-2-enyl diphosphate + 2 reduced [2Fe-2S]-[ferredoxin] + 2 H(+). It functions in the pathway isoprenoid biosynthesis; dimethylallyl diphosphate biosynthesis; dimethylallyl diphosphate from (2E)-4-hydroxy-3-methylbutenyl diphosphate: step 1/1. The protein operates within isoprenoid biosynthesis; isopentenyl diphosphate biosynthesis via DXP pathway; isopentenyl diphosphate from 1-deoxy-D-xylulose 5-phosphate: step 6/6. Its function is as follows. Catalyzes the conversion of 1-hydroxy-2-methyl-2-(E)-butenyl 4-diphosphate (HMBPP) into a mixture of isopentenyl diphosphate (IPP) and dimethylallyl diphosphate (DMAPP). Acts in the terminal step of the DOXP/MEP pathway for isoprenoid precursor biosynthesis. Has a higher activity compared with LytB2. Is essential for M.tuberculosis growth in vitro. The polypeptide is 4-hydroxy-3-methylbut-2-enyl diphosphate reductase 2 (Mycobacterium tuberculosis (strain ATCC 25618 / H37Rv)).